The primary structure comprises 716 residues: Fatty acid oxidation complex subunit alpha (716 aa).

Residues 1-189 (MIYQSPTIQV…KVGAVDAVVA (189 aa)) form an enoyl-CoA hydratase/isomerase region. Asp296 lines the substrate pocket. Residues 311–716 (KDVKSAAVLG…AANNGSYYQA (406 aa)) form a 3-hydroxyacyl-CoA dehydrogenase region. NAD(+) contacts are provided by residues Met324, Asp343, 400–402 (VVE), Lys407, and Ser429. Catalysis depends on His450, which acts as the For 3-hydroxyacyl-CoA dehydrogenase activity. Asn453 is an NAD(+) binding site. Residues Asn500 and Tyr660 each coordinate substrate.

It in the N-terminal section; belongs to the enoyl-CoA hydratase/isomerase family. In the C-terminal section; belongs to the 3-hydroxyacyl-CoA dehydrogenase family. As to quaternary structure, heterotetramer of two alpha chains (FadB) and two beta chains (FadA).

It carries out the reaction a (3S)-3-hydroxyacyl-CoA + NAD(+) = a 3-oxoacyl-CoA + NADH + H(+). It catalyses the reaction a (3S)-3-hydroxyacyl-CoA = a (2E)-enoyl-CoA + H2O. The enzyme catalyses a 4-saturated-(3S)-3-hydroxyacyl-CoA = a (3E)-enoyl-CoA + H2O. The catalysed reaction is (3S)-3-hydroxybutanoyl-CoA = (3R)-3-hydroxybutanoyl-CoA. It carries out the reaction a (3Z)-enoyl-CoA = a 4-saturated (2E)-enoyl-CoA. It catalyses the reaction a (3E)-enoyl-CoA = a 4-saturated (2E)-enoyl-CoA. It participates in lipid metabolism; fatty acid beta-oxidation. Functionally, involved in the aerobic and anaerobic degradation of long-chain fatty acids via beta-oxidation cycle. Catalyzes the formation of 3-oxoacyl-CoA from enoyl-CoA via L-3-hydroxyacyl-CoA. It can also use D-3-hydroxyacyl-CoA and cis-3-enoyl-CoA as substrate. The polypeptide is Fatty acid oxidation complex subunit alpha (Shewanella sp. (strain MR-7)).